A 130-amino-acid polypeptide reads, in one-letter code: Small ribosomal subunit protein uS8 (130 aa).

Belongs to the universal ribosomal protein uS8 family. In terms of assembly, part of the 30S ribosomal subunit. Contacts proteins S5 and S12.

In terms of biological role, one of the primary rRNA binding proteins, it binds directly to 16S rRNA central domain where it helps coordinate assembly of the platform of the 30S subunit. The chain is Small ribosomal subunit protein uS8 from Phytoplasma mali (strain AT).